Here is a 408-residue protein sequence, read N- to C-terminus: Putative UPF0496 protein 2 (408 aa).

The next 2 helical transmembrane spans lie at 224-244 (RIARGTAAAALVGACAAAIVA) and 252-272 (ALVGIGVAAAAFGATPAGAAR). The segment at 385–408 (MARGLPPPSPATVTTTSEERLTSS) is disordered.

Belongs to the UPF0496 family.

Its subcellular location is the membrane. The polypeptide is Putative UPF0496 protein 2 (Oryza sativa subsp. japonica (Rice)).